Here is a 276-residue protein sequence, read N- to C-terminus: MLIDFSKMHGLGNDFMVVDGVTQKVFFSNEVIKKLADRHFGIGFDQLLLVEPPYDPELDFHYRIFNADGSEVEQCGNGARCFARFVRLKGLINRDRIAVSTARGRIVLQLEGENQVTVNMGVPQFEPGKIPFRAQKAEKTYLLRAQEHTVMCGAVSMGNPHCVIEVPSVADAPVATLGPIMERHERFPERVNVGFMEMVNASEIKLRVFERGVGETLACGTGACAAVVVGISQGKLKERVTVTLPGGKLTIAWKGPGQPVYMTGPAEHVFDGQIEL.

Residues Asn13, Gln46, and Asn66 each coordinate substrate. The active-site Proton donor is Cys75. Substrate is bound by residues 76 to 77, Asn159, Asn192, and 210 to 211; these read GN and ER. Cys219 functions as the Proton acceptor in the catalytic mechanism. A substrate-binding site is contributed by 220–221; sequence GT.

This sequence belongs to the diaminopimelate epimerase family. Homodimer.

The protein localises to the cytoplasm. It catalyses the reaction (2S,6S)-2,6-diaminopimelate = meso-2,6-diaminopimelate. Its pathway is amino-acid biosynthesis; L-lysine biosynthesis via DAP pathway; DL-2,6-diaminopimelate from LL-2,6-diaminopimelate: step 1/1. In terms of biological role, catalyzes the stereoinversion of LL-2,6-diaminopimelate (L,L-DAP) to meso-diaminopimelate (meso-DAP), a precursor of L-lysine and an essential component of the bacterial peptidoglycan. The protein is Diaminopimelate epimerase of Aeromonas hydrophila subsp. hydrophila (strain ATCC 7966 / DSM 30187 / BCRC 13018 / CCUG 14551 / JCM 1027 / KCTC 2358 / NCIMB 9240 / NCTC 8049).